The following is a 704-amino-acid chain: Zinc finger protein MSN2 (704 aa).

The interval P84–T246 is disordered. Over residues L91–I112 the composition is skewed to basic and acidic residues. Positions K113–Y133 are enriched in polar residues. Residues N141 to T166 show a composition bias toward low complexity. Composition is skewed to polar residues over residues A167–T193 and N204–N220. Over residues N228–T246 the composition is skewed to low complexity. The 9aaTAD motif lies at S261–S269. A phosphoserine mark is found at S288 and S304. Residues N418–K437 form a disordered region. Polar residues predominate over residues T426–K437. Residues S451 and S582 each carry the phosphoserine modification. Positions L592 to V634 are disordered. Residues T593–G608 show a composition bias toward low complexity. A Phosphoserine modification is found at S633. 2 consecutive C2H2-type zinc fingers follow at residues F647–H665 and F676–H698.

As to quaternary structure, interacts with WHI2.

The protein resides in the cytoplasm. It localises to the nucleus. Functionally, positive transcriptional factor that acts as a component of the stress responsive system. Recognizes and binds to the stress response element (STRE) which is involved in the response to various forms of stress (heat, oxidative, osmotic, etc.). Involved in the regulation of the CTT1, DDR2, HSP12 genes. May be regulated via WHI2-PSR1 complex phosphatase activity. The sequence is that of Zinc finger protein MSN2 (MSN2) from Saccharomyces cerevisiae (strain ATCC 204508 / S288c) (Baker's yeast).